We begin with the raw amino-acid sequence, 399 residues long: S-adenosylmethionine synthase (399 aa).

Histidine 16 contributes to the ATP binding site. Aspartate 18 contacts Mg(2+). Glutamate 44 is a K(+) binding site. The L-methionine site is built by glutamate 57 and glutamine 100. Residues 100-110 are flexible loop; that stretch reads QSSDIAQGVNE. Residues 177-179, 244-245, aspartate 253, 259-260, alanine 276, and lysine 280 each bind ATP; these read DAK, RF, and RK. Aspartate 253 provides a ligand contact to L-methionine. An L-methionine-binding site is contributed by lysine 284.

This sequence belongs to the AdoMet synthase family. In terms of assembly, homotetramer; dimer of dimers. Requires Mg(2+) as cofactor. The cofactor is K(+).

Its subcellular location is the cytoplasm. The enzyme catalyses L-methionine + ATP + H2O = S-adenosyl-L-methionine + phosphate + diphosphate. Its pathway is amino-acid biosynthesis; S-adenosyl-L-methionine biosynthesis; S-adenosyl-L-methionine from L-methionine: step 1/1. Catalyzes the formation of S-adenosylmethionine (AdoMet) from methionine and ATP. The overall synthetic reaction is composed of two sequential steps, AdoMet formation and the subsequent tripolyphosphate hydrolysis which occurs prior to release of AdoMet from the enzyme. This Lactococcus lactis subsp. cremoris (strain MG1363) protein is S-adenosylmethionine synthase.